We begin with the raw amino-acid sequence, 137 residues long: MPTINQLVRKPRQSKIKKSDSPALNKGFNSKKKKFTDLNSPQKRGVCTRVGTMTPRKPNSALRKYARVRLSNNIEINAYIPGIGHNLQEHSVVLVRGGRVRDLPGVRYHIVRGALDTSGVDGRRQGRSLYGTKKPKN.

Residues 1 to 57 (MPTINQLVRKPRQSKIKKSDSPALNKGFNSKKKKFTDLNSPQKRGVCTRVGTMTPRK) are disordered. Residue Asp102 is modified to 3-methylthioaspartic acid. The interval 118–137 (SGVDGRRQGRSLYGTKKPKN) is disordered.

Belongs to the universal ribosomal protein uS12 family. In terms of assembly, part of the 30S ribosomal subunit. Contacts proteins S8 and S17. May interact with IF1 in the 30S initiation complex.

Functionally, with S4 and S5 plays an important role in translational accuracy. Interacts with and stabilizes bases of the 16S rRNA that are involved in tRNA selection in the A site and with the mRNA backbone. Located at the interface of the 30S and 50S subunits, it traverses the body of the 30S subunit contacting proteins on the other side and probably holding the rRNA structure together. The combined cluster of proteins S8, S12 and S17 appears to hold together the shoulder and platform of the 30S subunit. The protein is Small ribosomal subunit protein uS12 of Staphylococcus aureus (strain COL).